The chain runs to 156 residues: Arginine repressor (156 aa).

This sequence belongs to the ArgR family.

Its subcellular location is the cytoplasm. It participates in amino-acid biosynthesis; L-arginine biosynthesis [regulation]. In terms of biological role, regulates arginine biosynthesis genes. The chain is Arginine repressor from Enterobacter sp. (strain 638).